The following is a 403-amino-acid chain: Histidine--tRNA ligase (403 aa).

The protein belongs to the class-II aminoacyl-tRNA synthetase family. In terms of assembly, homodimer.

The protein localises to the cytoplasm. The enzyme catalyses tRNA(His) + L-histidine + ATP = L-histidyl-tRNA(His) + AMP + diphosphate + H(+). In Aquifex aeolicus (strain VF5), this protein is Histidine--tRNA ligase (hisS).